The chain runs to 785 residues: Neutral ceramidase (785 aa).

An N-terminal signal peptide occupies residues 1–35 (MEASSWLCYQARGFGSSRVWLWLLLALVLLNCSLV). A glycan (N-linked (GlcNAc...) asparagine) is linked at asparagine 31. Serine 359 serves as the catalytic Nucleophile. N-linked (GlcNAc...) asparagine glycosylation is found at asparagine 377, asparagine 675, and asparagine 685.

The protein belongs to the neutral ceramidase family. As to expression, expressed in seedlings, with higher levels in roots than in shoots.

The protein resides in the secreted. It localises to the endoplasmic reticulum. Its subcellular location is the golgi apparatus. The enzyme catalyses an N-acylsphing-4-enine + H2O = sphing-4-enine + a fatty acid. With respect to regulation, enhanced activity in the presence of calcium, magnesium, manganese and zinc ions, but inhibited activity in the presence of iron ion. Hydrolyzes the sphingolipid ceramide into sphingosine and free fatty acid. Uses ceramide instead of phytoceramide as substrate. The sequence is that of Neutral ceramidase from Oryza sativa subsp. japonica (Rice).